The following is a 405-amino-acid chain: MATVEELQTRVKQLEEELERERTRNRGGTDGGGGRKKIDQMSSEVVDSNPYSRLMALKRMGIVDNYERIRDFTVAIVGVGGVGSVTAEMLTRCGIGKLLLFDYDKVELANMNRLFFQPHQAGLSKVQAAEITLRDINPDVEFETHNYNITTVDNFQHFMDRISHGHLKGDRPVDLVLSCVDNFEARMAINTACNEQGQVWIESGVSENAVSGHIQVIKPGETACFACAPPLVVASGIDEKTLKREGVCAASLPTTMGIVAGFLVQNTLKYLLEFGSVTYYLGYNAMQDFFPSMAMKPNPNCDDSFCTKLQTEYQEKLLAQPKEEAKEETVEEVVHDANDWGIELVAETTEEELKAASHGHVPELVEGVHVAYVRPMTQEDEEGAAGLTVDDQESLEDLMAKMKSI.

Residues 1 to 44 are disordered; sequence MATVEELQTRVKQLEEELERERTRNRGGTDGGGGRKKIDQMSSE. The span at 7-24 shows a compositional bias: basic and acidic residues; sequence LQTRVKQLEEELERERTR. The ATP site is built by G81, D102, K125, N148, and N182. 2 residues coordinate Zn(2+): C224 and C227. The Glycyl thioester intermediate role is filled by C248. 2 residues coordinate Zn(2+): C301 and C306. The linker stretch occupies residues 346–377; the sequence is AETTEEELKAASHGHVPELVEGVHVAYVRPMT. The UFC1-binding sequence (UFC) motif lies at 390–405; the sequence is DDQESLEDLMAKMKSI.

Belongs to the ubiquitin-activating E1 family. UBA5 subfamily. As to quaternary structure, homodimer; homodimerization is required for UFM1 activation. Interacts (via UIS motif) with UFM1; binds UFM1 via a trans-binding mechanism in which UFM1 interacts with distinct sites in both subunits of the UBA5 homodimer. Interacts (via C-terminus) with UFC1.

It localises to the cytoplasm. The protein localises to the nucleus. The protein resides in the endoplasmic reticulum membrane. Its subcellular location is the golgi apparatus. E1-like enzyme which specifically catalyzes the first step in ufmylation. Activates UFM1 by first adenylating its C-terminal glycine residue with ATP, and thereafter linking this residue to the side chain of a cysteine residue in E1, yielding a UFM1-E1 thioester and free AMP. Activates UFM1 via a trans-binding mechanism, in which UFM1 interacts with distinct sites in both subunits of the UBA5 homodimer. Trans-binding also promotes stabilization of the UBA5 homodimer, and enhances ATP-binding. Transfer of UFM1 from UBA5 to the E2-like enzyme UFC1 also takes place using a trans mechanism. The polypeptide is Ubiquitin-like modifier-activating enzyme 5 (Branchiostoma floridae (Florida lancelet)).